Here is an 883-residue protein sequence, read N- to C-terminus: Glutamate receptor 2 (883 aa).

The first 24 residues, 1–24 (MQKIMHISVLLSPILWGLIFGVSS), serve as a signal peptide directing secretion. Topologically, residues 25-543 (NSIQIGGLFP…GVFSFLDPLA (519 aa)) are extracellular. Cys-78 and Cys-330 are oxidised to a cystine. N-linked (GlcNAc...) asparagine glycans are attached at residues Asn-256, Asn-370, Asn-406, and Asn-413. Positions 499, 501, and 506 each coordinate L-glutamate. Residues 544-564 (YEIWMCIVFAYIGVSVVLFLV) traverse the membrane as a helical segment. Over 565 to 591 (SRFSPYEWHTEEFEDGRETQSSESTNE) the chain is Cytoplasmic. Residues 592–607 (FGIFNSLWFSLGAFMR) constitute an intramembrane region (helical; Pore-forming). An intramembrane segment occupies 608–610 (QGC). Cys-610 carries the S-palmitoyl cysteine lipid modification. Topologically, residues 611–616 (DISPRS) are cytoplasmic. A helical transmembrane segment spans residues 617–637 (LSGRIVGGVWWFFTLIIISSY). Over 638–812 (TANLAAFLTV…EKTSALSLSN (175 aa)) the chain is Extracellular. L-glutamate-binding residues include Ser-675 and Thr-676. At Ser-683 the chain carries Phosphoserine; by PKC. Phosphoserine; by PKG is present on Ser-717. Glu-726 serves as a coordination point for L-glutamate. An intrachain disulfide couples Cys-739 to Cys-794. Residues 813-833 (VAGVFYILVGGLGLAMLVALI) form a helical membrane-spanning segment. At 834–883 (EFCYKSRAEAKRMKVAKNAQNINPSSSQNSQNFATYKEGYNVYGIESVKI) the chain is on the cytoplasmic side. Residue Cys-836 is the site of S-palmitoyl cysteine attachment. Ser-860 and Ser-863 each carry phosphoserine. Positions 867–877 (ATYKEGYNVYG) are required for interaction with IQSEC1. Tyr-876 is subject to Phosphotyrosine. Phosphoserine is present on Ser-880.

Belongs to the glutamate-gated ion channel (TC 1.A.10.1) family. GRIA2 subfamily. In terms of assembly, homotetramer or heterotetramer of pore-forming glutamate receptor subunits. Tetramers may be formed by the dimerization of dimers. May interact with MPP4. Forms a ternary complex with GRIP1 and CSPG4. Interacts with ATAD1 in an ATP-dependent manner. ATAD1-catalyzed ATP hydrolysis disrupts binding to ATAD1 and to GRIP1 and leads to AMPAR complex disassembly. Interacts with GRIP1 and GRIP2. Interacts with NSF via its C-terminus. Isoform 1, but not isoform 3, interacts with PICK1. Interacts with CACNG2. Interacts with GRIA1 and SYNDIG1. Part of a complex containing GRIA2, NSF and NAPA and/or NAPB. Interacts with SNX27 (via PDZ domain); the interaction is required for recycling to the plasma membrane when endocytosed and prevent degradation in lysosomes. Interacts with LRFN1. Found in a complex with GRIA1, GRIA3, GRIA4, CNIH2, CNIH3, CACNG2, CACNG3, CACNG4, CACNG5, CACNG7 and CACNG8. Interacts with CACNG5. Interacts with OLFM2. Interacts with AP4B1, AP4E1 and AP4M1; probably indirect it mediates the somatodendritic localization of GRIA2 in neurons. Forms a complex with GRIP1, NSG1 and STX12; controls the intracellular fate of AMPAR and the endosomal sorting of the GRIA2 subunit toward recycling and membrane targeting. Interacts with IQSEC1; the interaction is required for ARF6 activation. Interacts (heterotetramer form) with CNIH2 and CNIH3; this interaction promotes expression at the plasma membrane and extensively modulates their gating properties by slowing deactivation and desensitization kinetics. Post-translationally, phosphorylation at Tyr-876 is required for interaction with IQSEC1 and ARF6 activation, which in turn triggers AMPAR internalization for persistent synaptic depression. Palmitoylated. Depalmitoylated upon L-glutamate stimulation. ZDHHC3/GODZ specifically palmitoylates Cys-610, which leads to Golgi retention and decreased cell surface expression. In contrast, Cys-836 palmitoylation does not affect cell surface expression but regulates stimulation-dependent endocytosis. In terms of processing, N-glycosylated. Post-translationally, ubiquitinated by RNF167, leading to its degradation.

Its subcellular location is the cell membrane. It is found in the postsynaptic cell membrane. The protein resides in the postsynaptic density membrane. The enzyme catalyses Ca(2+)(in) = Ca(2+)(out). It carries out the reaction Na(+)(in) = Na(+)(out). Ionotropic glutamate receptor that functions as a ligand-gated cation channel, gated by L-glutamate and glutamatergic agonists such as alpha-amino-3-hydroxy-5-methyl-4-isoxazolepropionic acid (AMPA), quisqualic acid, and kainic acid. L-glutamate acts as an excitatory neurotransmitter at many synapses in the central nervous system and plays an important role in fast excitatory synaptic transmission. Binding of the excitatory neurotransmitter L-glutamate induces a conformation change, leading to the opening of the cation channel, and thereby converts the chemical signal to an electrical impulse upon entry of monovalent and divalent cations such as sodium and calcium. The receptor then desensitizes rapidly and enters in a transient inactive state, characterized by the presence of bound agonist. In the presence of CACNG4 or CACNG7 or CACNG8, shows resensitization which is characterized by a delayed accumulation of current flux upon continued application of L-glutamate. Through complex formation with NSG1, GRIP1 and STX12 controls the intracellular fate of AMPAR and the endosomal sorting of the GRIA2 subunit toward recycling and membrane targeting. This Macaca fascicularis (Crab-eating macaque) protein is Glutamate receptor 2.